The primary structure comprises 383 residues: S-adenosylmethionine synthase (383 aa).

His15 is an ATP binding site. Asp17 serves as a coordination point for Mg(2+). Glu43 contacts K(+). Residues Glu56 and Gln99 each contribute to the L-methionine site. The interval 99–109 is flexible loop; that stretch reads QSPDINQGVDR. ATP contacts are provided by residues 164–166, 230–231, Asp239, 245–246, Ala262, and Lys266; these read DAK, RF, and RK. L-methionine is bound at residue Asp239. An L-methionine-binding site is contributed by Lys270.

Belongs to the AdoMet synthase family. As to quaternary structure, homotetramer; dimer of dimers. Mg(2+) serves as cofactor. K(+) is required as a cofactor.

It localises to the cytoplasm. The enzyme catalyses L-methionine + ATP + H2O = S-adenosyl-L-methionine + phosphate + diphosphate. Its pathway is amino-acid biosynthesis; S-adenosyl-L-methionine biosynthesis; S-adenosyl-L-methionine from L-methionine: step 1/1. Its function is as follows. Catalyzes the formation of S-adenosylmethionine (AdoMet) from methionine and ATP. The overall synthetic reaction is composed of two sequential steps, AdoMet formation and the subsequent tripolyphosphate hydrolysis which occurs prior to release of AdoMet from the enzyme. In Shewanella oneidensis (strain ATCC 700550 / JCM 31522 / CIP 106686 / LMG 19005 / NCIMB 14063 / MR-1), this protein is S-adenosylmethionine synthase.